We begin with the raw amino-acid sequence, 288 residues long: Thymidylate synthase (288 aa).

Position 21 (arginine 21) interacts with dUMP. Asparagine 51 lines the (6R)-5,10-methylene-5,6,7,8-tetrahydrofolate pocket. Residue 150 to 151 (RR) participates in dUMP binding. Cysteine 170 acts as the Nucleophile in catalysis. Residues 190–193 (RSGD), asparagine 201, and 231–233 (HIY) each bind dUMP. Position 193 (aspartate 193) interacts with (6R)-5,10-methylene-5,6,7,8-tetrahydrofolate. Residue alanine 287 coordinates (6R)-5,10-methylene-5,6,7,8-tetrahydrofolate.

The protein belongs to the thymidylate synthase family. Bacterial-type ThyA subfamily. In terms of assembly, homodimer.

The protein localises to the cytoplasm. It catalyses the reaction dUMP + (6R)-5,10-methylene-5,6,7,8-tetrahydrofolate = 7,8-dihydrofolate + dTMP. It participates in pyrimidine metabolism; dTTP biosynthesis. In terms of biological role, catalyzes the reductive methylation of 2'-deoxyuridine-5'-monophosphate (dUMP) to 2'-deoxythymidine-5'-monophosphate (dTMP) while utilizing 5,10-methylenetetrahydrofolate (mTHF) as the methyl donor and reductant in the reaction, yielding dihydrofolate (DHF) as a by-product. This enzymatic reaction provides an intracellular de novo source of dTMP, an essential precursor for DNA biosynthesis. The chain is Thymidylate synthase from Phytoplasma mali (strain AT).